The following is an 83-amino-acid chain: U3-theraphotoxin-Cg1a (83 aa).

Positions 1 to 23 are cleaved as a signal peptide; the sequence is MRTFTLIAILTCAVLVIFHAAAA. A propeptide spanning residues 24 to 44 is cleaved from the precursor; the sequence is EELEAQDVIETEALATLDEER. 3 disulfides stabilise this stretch: Cys48–Cys61, Cys52–Cys75, and Cys69–Cys80.

This sequence belongs to the neurotoxin 12 (Hwtx-2) family. 03 (juruin) subfamily. In terms of processing, contains 3 disulfide bonds. Two different connectivities are observed in similar proteins (C1-C3, C2-C5, C4-C6 or C1-C4, C2-C5, C3-C6). In terms of tissue distribution, expressed by the venom gland.

The protein resides in the secreted. Probable ion channel inhibitor. The protein is U3-theraphotoxin-Cg1a of Chilobrachys guangxiensis (Chinese earth tiger tarantula).